The chain runs to 197 residues: Imidazoleglycerol-phosphate dehydratase (197 aa).

The protein belongs to the imidazoleglycerol-phosphate dehydratase family.

It localises to the cytoplasm. The catalysed reaction is D-erythro-1-(imidazol-4-yl)glycerol 3-phosphate = 3-(imidazol-4-yl)-2-oxopropyl phosphate + H2O. Its pathway is amino-acid biosynthesis; L-histidine biosynthesis; L-histidine from 5-phospho-alpha-D-ribose 1-diphosphate: step 6/9. This chain is Imidazoleglycerol-phosphate dehydratase, found in Marinomonas sp. (strain MWYL1).